Reading from the N-terminus, the 428-residue chain is 3-phosphoshikimate 1-carboxyvinyltransferase (428 aa).

3 residues coordinate 3-phosphoshikimate: lysine 22, serine 23, and arginine 27. Lysine 22 is a binding site for phosphoenolpyruvate. Glycine 96 and arginine 124 together coordinate phosphoenolpyruvate. 3-phosphoshikimate-binding residues include serine 170, serine 171, glutamine 172, serine 198, aspartate 314, asparagine 337, and lysine 341. Residue glutamine 172 participates in phosphoenolpyruvate binding. Aspartate 314 (proton acceptor) is an active-site residue. Arginine 345, arginine 387, and lysine 412 together coordinate phosphoenolpyruvate.

It belongs to the EPSP synthase family. Monomer.

The protein localises to the cytoplasm. It carries out the reaction 3-phosphoshikimate + phosphoenolpyruvate = 5-O-(1-carboxyvinyl)-3-phosphoshikimate + phosphate. It participates in metabolic intermediate biosynthesis; chorismate biosynthesis; chorismate from D-erythrose 4-phosphate and phosphoenolpyruvate: step 6/7. Catalyzes the transfer of the enolpyruvyl moiety of phosphoenolpyruvate (PEP) to the 5-hydroxyl of shikimate-3-phosphate (S3P) to produce enolpyruvyl shikimate-3-phosphate and inorganic phosphate. This chain is 3-phosphoshikimate 1-carboxyvinyltransferase, found in Vibrio vulnificus (strain YJ016).